The primary structure comprises 583 residues: Bifunctional lycopene cyclase/phytoene synthase (583 aa).

The segment at Met-1 to Asn-243 is lycopene beta-cyclase. The next 7 helical transmembrane spans lie at Phe-3–Leu-23, Lys-35–Ile-55, Ile-75–Leu-97, Tyr-120–Ile-140, Leu-151–Ile-171, Ala-173–Val-193, and Ile-221–Phe-241. The interval Thr-250–Lys-583 is phytoene synthase.

The protein in the N-terminal section; belongs to the lycopene beta-cyclase family. This sequence in the C-terminal section; belongs to the phytoene/squalene synthase family.

The protein localises to the membrane. It carries out the reaction all-trans-lycopene = gamma-carotene. The catalysed reaction is gamma-carotene = all-trans-beta-carotene. The enzyme catalyses 2 (2E,6E,10E)-geranylgeranyl diphosphate = 15-cis-phytoene + 2 diphosphate. The protein operates within carotenoid biosynthesis; beta-carotene biosynthesis. It functions in the pathway carotenoid biosynthesis; phytoene biosynthesis; all-trans-phytoene from geranylgeranyl diphosphate: step 1/1. Functionally, bifunctional enzyme that catalyzes the reactions from geranylgeranyl diphosphate to phytoene (phytoene synthase) and lycopene to beta-carotene via the intermediate gamma-carotene (lycopene cyclase). In Pyrenophora tritici-repentis (strain Pt-1C-BFP) (Wheat tan spot fungus), this protein is Bifunctional lycopene cyclase/phytoene synthase.